A 344-amino-acid polypeptide reads, in one-letter code: D-arabinose dehydrogenase [NAD(P)+] heavy chain (344 aa).

Y71 functions as the Proton donor in the catalytic mechanism. H131 serves as a coordination point for substrate. Residue T151 is modified to Phosphothreonine. Position 241–295 (241–295 (SPLGSHGAPNLKIPLVKKLAEKYNVTGNDLLISYHIRQGTIVIPRSLNPVRISSS)) interacts with NADP(+).

It belongs to the aldo/keto reductase family. Heterodimer of a heavy chain and a light chain.

Its subcellular location is the cytoplasm. The enzyme catalyses D-arabinose + NADP(+) = D-arabinono-1,4-lactone + NADPH + H(+). It catalyses the reaction D-arabinose + NAD(+) = D-arabinono-1,4-lactone + NADH + H(+). Catalyzes the oxidation of D-arabinose, L-xylose, L-fucose and L-galactose in the presence of NADP(+). This chain is D-arabinose dehydrogenase [NAD(P)+] heavy chain (ARA1), found in Saccharomyces cerevisiae (strain ATCC 204508 / S288c) (Baker's yeast).